Here is a 534-residue protein sequence, read N- to C-terminus: GMP synthase [glutamine-hydrolyzing] (534 aa).

Residues 20–210 enclose the Glutamine amidotransferase type-1 domain; the sequence is PVLVIDFGAQ…LLVGAGCRPS (191 aa). Cys-97 (nucleophile) is an active-site residue. Active-site residues include His-184 and Glu-186. Positions 211–408 constitute a GMPS ATP-PPase domain; it reads WTMINIVEEA…LGLPEDIVWR (198 aa). Residue 238–244 coordinates ATP; that stretch reads SGGVDSA.

Homodimer.

It catalyses the reaction XMP + L-glutamine + ATP + H2O = GMP + L-glutamate + AMP + diphosphate + 2 H(+). Its pathway is purine metabolism; GMP biosynthesis; GMP from XMP (L-Gln route): step 1/1. Catalyzes the synthesis of GMP from XMP. This is GMP synthase [glutamine-hydrolyzing] from Parafrankia sp. (strain EAN1pec).